The chain runs to 334 residues: Ribosomal RNA small subunit methyltransferase H (334 aa).

Residues 34–36, Asp-52, Ala-87, Asp-100, and Gln-107 contribute to the S-adenosyl-L-methionine site; that span reads GGY.

Belongs to the methyltransferase superfamily. RsmH family.

The protein localises to the cytoplasm. It catalyses the reaction cytidine(1402) in 16S rRNA + S-adenosyl-L-methionine = N(4)-methylcytidine(1402) in 16S rRNA + S-adenosyl-L-homocysteine + H(+). In terms of biological role, specifically methylates the N4 position of cytidine in position 1402 (C1402) of 16S rRNA. The sequence is that of Ribosomal RNA small subunit methyltransferase H from Maricaulis maris (strain MCS10) (Caulobacter maris).